We begin with the raw amino-acid sequence, 398 residues long: KLGVPQPEGGYATSQKEAIEVAKRIGFPVLVRPSYVLGGRAMEIVYDEMDLERYMKEAVRVSHEHPILIDDFLEAASEIDVDAVCDQKDVIIGAIMEHIEEAGVHSGDSACVIPPQSLSPEVLDQVRDYTRKIALALRVKGLINIQMAEKGGKVYVLEANPRSSRTIPFVSKAVGIPLAKIAAKVIVGHSLKSLGYMDEPKPKHVSIKEVLLPFDKLPGADPVLGPEMKSTGEVMGIDYDFGRAYYKAELAADNVLPLTGKVFLSIRNADKTELVDVAKKLQAAGLELMGTEGTVNYLAQHGVFMDVVKKVHDGSPNVIDMMRRDEVNLIINTPTSKQSRRDGSRIRRAAVDFKVPYITTMQAAIAAAAAIETMKKGEELTIKSINEYHKEMEEENKV.

An ATP-grasp domain is found at 1–187 (KLGVPQPEGG…LAKIAAKVIV (187 aa)). Positions 1–255 (KLGVPQPEGG…YKAELAADNV (255 aa)) are carbamoyl phosphate synthetic domain. Residues Arg32, Asp71, Leu73, Glu78, Gly103, Val104, His105, Ser106, Gln146, and Glu158 each contribute to the ATP site. Residues Gln146, Glu158, and Asn160 each contribute to the Mg(2+) site. Positions 146, 158, and 160 each coordinate Mn(2+). One can recognise an MGS-like domain in the interval 254–395 (NVLPLTGKVF…NEYHKEMEEE (142 aa)). The tract at residues 256-398 (LPLTGKVFLS…HKEMEEENKV (143 aa)) is allosteric domain.

Belongs to the CarB family. Composed of two chains; the small (or glutamine) chain promotes the hydrolysis of glutamine to ammonia, which is used by the large (or ammonia) chain to synthesize carbamoyl phosphate. Tetramer of heterodimers (alpha,beta)4. Mg(2+) is required as a cofactor. The cofactor is Mn(2+).

The catalysed reaction is hydrogencarbonate + L-glutamine + 2 ATP + H2O = carbamoyl phosphate + L-glutamate + 2 ADP + phosphate + 2 H(+). It catalyses the reaction hydrogencarbonate + NH4(+) + 2 ATP = carbamoyl phosphate + 2 ADP + phosphate + 2 H(+). Its pathway is amino-acid biosynthesis; L-arginine biosynthesis; carbamoyl phosphate from bicarbonate: step 1/1. The protein operates within pyrimidine metabolism; UMP biosynthesis via de novo pathway; (S)-dihydroorotate from bicarbonate: step 1/3. Large subunit of the glutamine-dependent carbamoyl phosphate synthetase (CPSase). CPSase catalyzes the formation of carbamoyl phosphate from the ammonia moiety of glutamine, carbonate, and phosphate donated by ATP, constituting the first step of 2 biosynthetic pathways, one leading to arginine and/or urea and the other to pyrimidine nucleotides. The large subunit (synthetase) binds the substrates ammonia (free or transferred from glutamine from the small subunit), hydrogencarbonate and ATP and carries out an ATP-coupled ligase reaction, activating hydrogencarbonate by forming carboxy phosphate which reacts with ammonia to form carbamoyl phosphate. This is Carbamoyl phosphate synthase large chain from Methanosarcina barkeri.